Reading from the N-terminus, the 88-residue chain is Apolipoprotein C-I (88 aa).

An N-terminal signal peptide occupies residues 1 to 26 (MRLFIALPVLIVVVAMALEGPAPAQA).

The protein belongs to the apolipoprotein C1 family.

It localises to the secreted. Its function is as follows. Inhibitor of lipoprotein binding to the low density lipoprotein (LDL) receptor, LDL receptor-related protein, and very low density lipoprotein (VLDL) receptor. Associates with high density lipoproteins (HDL) and the triacylglycerol-rich lipoproteins in the plasma and makes up about 10% of the protein of the VLDL and 2% of that of HDL. Appears to interfere directly with fatty acid uptake and is also the major plasma inhibitor of cholesteryl ester transfer protein (CETP). Modulates the interaction of APOE with beta-migrating VLDL and inhibits binding of beta-VLDL to the LDL receptor-related protein. Binds free fatty acids and reduces their intracellular esterification. This is Apolipoprotein C-I (Apoc1) from Grammomys surdaster (African woodland thicket rat).